Consider the following 429-residue polypeptide: MDNDGTIVDVTTHQLPWHTASHQRQRAFAQSAKLQDVLYEIRGPVHQHAARLEAEGHRILKLNIGNPAPFGFEAPDVIMRDIIQALPYAQGYSDSQGILSARRAVVTRYELVPGFPRFDVDDVYLGNGVSELITMTLQALLDNGDQVLIPSPDYPLWTASTSLAGGTPVHYLCDETQGWQPDIADLESKITERTKALVVINPNNPTGAVYSCEILTQMVDLARKHQLLLLADEIYDKILYDDAKHISLASIAPDMLCLTFNGLSKAYRVAGYRAGWLAITGPKEHASSFIEGIGLLANMRLCPNVPAQHAIQVALGGHQSIEDLVLPGGRLLEQRDIAWTKLNEIPGVSCVKPAGALYAFPRLDPEVYDIDDDEQLVLDLLLSEKILVTQGTGFNWPAPDHLRLVTLPWSRDLAAAIERLGNFLVSYRQ.

The L-alanine site is built by Gly65 and Asn204. Lys265 is subject to N6-(pyridoxal phosphate)lysine. Arg403 provides a ligand contact to L-alanine.

It belongs to the class-I pyridoxal-phosphate-dependent aminotransferase family. Homodimer. Requires pyridoxal 5'-phosphate as cofactor.

Its subcellular location is the cytoplasm. The catalysed reaction is L-alanine + 2-oxoglutarate = pyruvate + L-glutamate. In Mycobacterium bovis (strain ATCC BAA-935 / AF2122/97), this protein is Alanine aminotransferase (aspC).